Consider the following 705-residue polypeptide: MNHIFETTVAGRTLKGEFGKLGMLSDCALNISYGDTVVLVNVNASPEPKEGIDFFPLSIEYQERLYAVGKIPGGFIKREGRPSDKAILNARAIDRPLRPLFPKGYRNDVQVVCTVVSVDQDNLPNILAMNGASLALCLSSIPFTIPVGTVSVGLIDGEFIINPTSKQREESILDLTVCATKDRVMMIEAGGEEIPEDVMYDAIMFGFEECKKIADFQQKVMEQYGKQKAELILHEIDADIEKEVREFAFDMVKEAMYITDKDSRNKAMDEVKEKVSEEFDEKYPDNLGDIGEAIYKMQKEVVRNMILNEKRRPDGRYFDEIRPLSSEVSLLPRTHGSGLFTRGLTQVMSVATLGSISEGQVLDGIEEETSKRYMHHYNFPSYSVGEVRPLRGPNRREIGHGALAEKAIEPLIPSEQEFPYAIRVVSEVLSSNGSTSQASVCGSTLALLDAGVPMKRPAAGIAMGLVTSEDLEKEEILTDIQGLEDFFGDMDFKVAGTEKGITAIQVDTKIKGLSNDCIKKAITNARKARLTILEVINNCIDKPREEVSKYAPKVFTMSINPSKIKDVIGAGGKTINKIIDETGVKIDIKEDGSVFVTAEDYESGKKALAMIDGYSREVKEGEVYLGKVTKIANFGAFVEILPGKEGLVHISKLDVKRVNKVEDVVSVGDEILVKVTEIDSMGRVNLSRKDAIKDSENNQDKDTEK.

Aspartate 485 and aspartate 491 together coordinate Mg(2+). One can recognise a KH domain in the interval 552 to 611 (PKVFTMSINPSKIKDVIGAGGKTINKIIDETGVKIDIKEDGSVFVTAEDYESGKKALAMI). The region spanning 621–689 (GEVYLGKVTK…SMGRVNLSRK (69 aa)) is the S1 motif domain.

It belongs to the polyribonucleotide nucleotidyltransferase family. Requires Mg(2+) as cofactor.

The protein resides in the cytoplasm. It catalyses the reaction RNA(n+1) + phosphate = RNA(n) + a ribonucleoside 5'-diphosphate. Involved in mRNA degradation. Catalyzes the phosphorolysis of single-stranded polyribonucleotides processively in the 3'- to 5'-direction. This Clostridium novyi (strain NT) protein is Polyribonucleotide nucleotidyltransferase.